Here is a 548-residue protein sequence, read N- to C-terminus: MASRVESAAWRALQAHQQEIAPLQMRQLFAEDSARFERFSLRWQGMLCDYSKHRITARTMELLLDLARSAEIEAARNAMMQGQPINLTEKRAVLHTALRKPQSVPFAVDGQNVAADVAEVLAQMEGCCNRIISGEWVGYTGKAMTDIVNIGIGGSDLGPYMVTEALRPFAHGKLNVHFVSNVDGTHLSETLKKLNPETTLFIVASKTFTTQETLSNAMSARAWFLQCAVDAAHIAKHFVAVSTNRAKVVEFGIDEANMFRFWDWVGGRYSLWSSIGLSIAMYLGFEKFRQLLAGAYAMDEHFCSAPLESNMPVIMAMLGIWYSNFFGCTSHAVIPYDQYLHRFPAYLQQLDMESNGKRVTRDGTVVDYATGAVIWGEPGTNSQHAFFQLLHQGTQIIPADFILPLKTQNPIGAHHDMLASNCFAQTEALMKGKSEEEVERELVAAGADAATIAALLPHKVFPGNRPTTTLLLDELNPFTLGSLIALYEHKVFVQGIVWNINSFDQWGVELGKQLANVILPELQASSNAAAHDSSTNALINAYRAQRYC.

Catalysis depends on glutamate 353, which acts as the Proton donor. Residues histidine 384 and lysine 512 contribute to the active site.

It belongs to the GPI family.

It localises to the cytoplasm. It catalyses the reaction alpha-D-glucose 6-phosphate = beta-D-fructose 6-phosphate. It participates in carbohydrate biosynthesis; gluconeogenesis. The protein operates within carbohydrate degradation; glycolysis; D-glyceraldehyde 3-phosphate and glycerone phosphate from D-glucose: step 2/4. Catalyzes the reversible isomerization of glucose-6-phosphate to fructose-6-phosphate. This chain is Glucose-6-phosphate isomerase, found in Chlorobium chlorochromatii (strain CaD3).